Here is a 450-residue protein sequence, read N- to C-terminus: Cell division cycle 20.5, cofactor of APC complex (450 aa).

7 WD repeats span residues alanine 129–leucine 166, glutamate 171–threonine 210, glycine 214–glutamate 251, glycine 255–proline 294, glutamate 304–serine 346, glutamate 348–glutamate 389, and glycine 392–threonine 431.

It belongs to the WD repeat CDC20/Fizzy family. As to quaternary structure, the APC/C is composed of at least 11 subunits that stay tightly associated throughout the cell cycle. Binds to GIG1 and PYM. Part of the mitotic checkpoint complex (MCC); interacts with MAD2 and BUB1.

It localises to the nucleus. The protein operates within protein modification; protein ubiquitination. Component of the anaphase promoting complex/cyclosome (APC/C), a cell cycle-regulated E3 ubiquitin-protein ligase complex that controls progression through mitosis and the G1 phase of the cell cycle. The chain is Cell division cycle 20.5, cofactor of APC complex (CDC20-5) from Arabidopsis thaliana (Mouse-ear cress).